Here is a 288-residue protein sequence, read N- to C-terminus: Phytanoyl-CoA dioxygenase domain-containing protein 1 homolog (288 aa).

Residues lysine 95, methionine 134, 149-151, and tryptophan 167 each bind 2-oxoglutarate; that span reads HVD. Residues histidine 149 and aspartate 151 each coordinate Fe cation. A Fe cation-binding site is contributed by histidine 242. 2-oxoglutarate-binding residues include serine 244 and arginine 253.

This sequence belongs to the PhyH family. PHYHD1 subfamily. It depends on Fe cation as a cofactor.

In terms of biological role, has alpha-ketoglutarate-dependent dioxygenase activity. Does not show detectable activity towards fatty acid CoA thioesters. Is not expected to be active with phytanoyl CoA. The protein is Phytanoyl-CoA dioxygenase domain-containing protein 1 homolog of Caenorhabditis briggsae.